We begin with the raw amino-acid sequence, 360 residues long: Abhydrolase domain-containing protein lid-1 (360 aa).

The 131-residue stretch at 73-203 (AIVFIPGLGA…MSFLGGVAGY (131 aa)) folds into the AB hydrolase-1 domain.

Belongs to the peptidase S33 family. ABHD4/ABHD5 subfamily. In terms of assembly, interacts with atgl-1.

The protein localises to the lipid droplet. Acts coordinately with atgl-1 within the lipolytic cascade to distribute stored energy to tissues during nutritional deprivation. The sequence is that of Abhydrolase domain-containing protein lid-1 from Caenorhabditis elegans.